A 131-amino-acid polypeptide reads, in one-letter code: Large ribosomal subunit protein eL32 (131 aa).

The protein belongs to the eukaryotic ribosomal protein eL32 family. Component of the large ribosomal subunit. Mature ribosomes consist of a small (40S) and a large (60S) subunit. The 40S subunit contains about 32 different proteins and 1 molecule of RNA (18S). The 60S subunit contains 45 different proteins and 3 molecules of RNA (25S, 5.8S and 5S).

It localises to the cytoplasm. Its function is as follows. Component of the ribosome, a large ribonucleoprotein complex responsible for the synthesis of proteins in the cell. The small ribosomal subunit (SSU) binds messenger RNAs (mRNAs) and translates the encoded message by selecting cognate aminoacyl-transfer RNA (tRNA) molecules. The large subunit (LSU) contains the ribosomal catalytic site termed the peptidyl transferase center (PTC), which catalyzes the formation of peptide bonds, thereby polymerizing the amino acids delivered by tRNAs into a polypeptide chain. The nascent polypeptides leave the ribosome through a tunnel in the LSU and interact with protein factors that function in enzymatic processing, targeting, and the membrane insertion of nascent chains at the exit of the ribosomal tunnel. The polypeptide is Large ribosomal subunit protein eL32 (Candida albicans (strain SC5314 / ATCC MYA-2876) (Yeast)).